We begin with the raw amino-acid sequence, 456 residues long: GTPase Der (456 aa).

EngA-type G domains lie at 4–169 (PVVA…PSKD) and 178–353 (VQLA…DQSR). Residues 10-17 (GRPNVGKS), 57-61 (DTGGL), 120-123 (NKCE), 184-191 (GRPNVGKS), 231-235 (DTAGI), and 296-299 (NKWD) contribute to the GTP site. The KH-like domain maps to 354–439 (RRVTTSVVNE…PIKLFWRGKQ (86 aa)).

This sequence belongs to the TRAFAC class TrmE-Era-EngA-EngB-Septin-like GTPase superfamily. EngA (Der) GTPase family. Associates with the 50S ribosomal subunit.

Functionally, GTPase that plays an essential role in the late steps of ribosome biogenesis. The sequence is that of GTPase Der from Prochlorococcus marinus (strain NATL2A).